The sequence spans 293 residues: Phosphatidylserine decarboxylase proenzyme (293 aa).

Catalysis depends on charge relay system; for autoendoproteolytic cleavage activity residues Asp-90, His-147, and Ser-254. Ser-254 acts as the Schiff-base intermediate with substrate; via pyruvic acid; for decarboxylase activity in catalysis. Ser-254 carries the post-translational modification Pyruvic acid (Ser); by autocatalysis.

It belongs to the phosphatidylserine decarboxylase family. PSD-B subfamily. Prokaryotic type I sub-subfamily. In terms of assembly, heterodimer of a large membrane-associated beta subunit and a small pyruvoyl-containing alpha subunit. Requires pyruvate as cofactor. Post-translationally, is synthesized initially as an inactive proenzyme. Formation of the active enzyme involves a self-maturation process in which the active site pyruvoyl group is generated from an internal serine residue via an autocatalytic post-translational modification. Two non-identical subunits are generated from the proenzyme in this reaction, and the pyruvate is formed at the N-terminus of the alpha chain, which is derived from the carboxyl end of the proenzyme. The autoendoproteolytic cleavage occurs by a canonical serine protease mechanism, in which the side chain hydroxyl group of the serine supplies its oxygen atom to form the C-terminus of the beta chain, while the remainder of the serine residue undergoes an oxidative deamination to produce ammonia and the pyruvoyl prosthetic group on the alpha chain. During this reaction, the Ser that is part of the protease active site of the proenzyme becomes the pyruvoyl prosthetic group, which constitutes an essential element of the active site of the mature decarboxylase.

It localises to the cell membrane. It carries out the reaction a 1,2-diacyl-sn-glycero-3-phospho-L-serine + H(+) = a 1,2-diacyl-sn-glycero-3-phosphoethanolamine + CO2. It participates in phospholipid metabolism; phosphatidylethanolamine biosynthesis; phosphatidylethanolamine from CDP-diacylglycerol: step 2/2. Catalyzes the formation of phosphatidylethanolamine (PtdEtn) from phosphatidylserine (PtdSer). The polypeptide is Phosphatidylserine decarboxylase proenzyme (Yersinia pseudotuberculosis serotype O:1b (strain IP 31758)).